Here is a 445-residue protein sequence, read N- to C-terminus: MSDSKEPRVQQLGLLEEDPTTSGIRLFPRDFQFQQIHGHKSSTGCLGHGPLVLQLLSFTLLAGVLVAILVQVSKVPSSLSQEQSEQDTIYQNLTQLKAAVGELSEKSKLQEIYQELTQLKAAVGELPEKSKLQEIYQELTQLKAAVGELPEKSKLQEIYQELTQLKAAVGELPEKSKLQEIYQELTQLKAAVGELPEKSKLQEIYQELTQLKAAVGELPEKSKLQETYQELTQLKAAVGELPEKSKLQEIYQELTQLKAAVGELPEKSELQEIYQELTQLKAALGKLPDQSKQQQIYQELTDLKTAFERLCRHCPKDWTFFQGNCYFMSNSQRNWHNSVTACREVRAQLVVIKSAEEQNFLQLQTSRSNRFSWMGLSDLNQEGTWQWVDGSPLSPSFQRYWNSGEPNNSGNEDCAEFSGSGWNDNRCDIDNYWICKKPAVCFRDE.

The Cytoplasmic portion of the chain corresponds to 1-49 (MSDSKEPRVQQLGLLEEDPTTSGIRLFPRDFQFQQIHGHKSSTGCLGHG). Residues 14-15 (LL) carry the Endocytosis signal motif. A helical; Signal-anchor for type II membrane protein membrane pass occupies residues 50–70 (PLVLQLLSFTLLAGVLVAILV). The Extracellular portion of the chain corresponds to 71-445 (QVSKVPSSLS…KKPAVCFRDE (375 aa)). The N-linked (GlcNAc...) asparagine glycan is linked to Asn92. Tandem repeats lie at residues 108–130 (KLQE…PEKS), 131–151 (KLQE…ELPE), 154–176 (KLQE…PEKS), 177–199 (KLQE…PEKS), 200–222 (KLQE…PEKS), 223–245 (KLQE…PEKS), 246–268 (KLQE…PEKS), 269–291 (ELQE…PDQS), and 292–314 (KQQQ…CRHC). The interval 108-315 (KLQEIYQELT…AFERLCRHCP (208 aa)) is 9 X approximate tandem repeats. 4 disulfide bridges follow: Cys311–Cys441, Cys314–Cys325, Cys342–Cys435, and Cys414–Cys427. A C-type lectin domain is found at 320–436 (FFQGNCYFMS…CDIDNYWICK (117 aa)). Ca(2+) is bound by residues Glu405, Asn407, Ser409, Glu412, Asn423, and Asp424. N-linked (GlcNAc...) asparagine glycosylation is present at Asn407.

In terms of assembly, homotetramer.

It localises to the membrane. Probable pathogen-recognition receptor involved in peripheral immune surveillance in liver. May mediate the endocytosis of pathogens which are subsequently degraded in lysosomal compartments. Probably recognizes in a calcium-dependent manner high mannose N-linked oligosaccharides in a variety of pathogen antigens. Is a receptor for ICAM3, probably by binding to mannose-like carbohydrates. In Pan troglodytes (Chimpanzee), this protein is C-type lectin domain family 4 member M (CLEC4M).